We begin with the raw amino-acid sequence, 402 residues long: Dynactin subunit 2 (402 aa).

Residues 1-24 (MADPKYADLPGIARNEPDVYETSD) are disordered. The residue at position 2 (Ala2) is an N-acetylalanine. The residue at position 6 (Tyr6) is a Phosphotyrosine. A Phosphoserine modification is found at Ser83. Position 86 is a phosphotyrosine (Tyr86). Residues 100-130 (QQKYQRLLHEVQELTTEVEKIKTTVKESATE) adopt a coiled-coil conformation. 2 positions are modified to phosphothreonine: Thr134 and Thr199. The interval 185 to 205 (KSSKGSSGGKSTGGTPPDSSL) is disordered. Residues 215–247 (EQDKFSQAAKVAELEKRLTELEATVRCDQDAQN) are a coiled coil. Phosphoserine is present on Ser321.

Belongs to the dynactin subunit 2 family. In terms of assembly, subunit of dynactin, a multiprotein complex part of a tripartite complex with dynein and a adapter, such as BICDL1, BICD2 or HOOK3. The dynactin complex is built around ACTR1A/ACTB filament and consists of an actin-related filament composed of a shoulder domain, a pointed end and a barbed end. Its length is defined by its flexible shoulder domain. The soulder is composed of 2 DCTN1 subunits, 4 DCTN2 and 2 DCTN3. The 4 DCNT2 (via N-terminus) bind the ACTR1A filament and act as molecular rulers to determine the length. The pointed end is important for binding dynein-dynactin cargo adapters and consists of 4 subunits: ACTR10, DCNT4, DCTN5 and DCTN6. The barbed end is composed of a CAPZA1:CAPZB heterodimers, which binds ACTR1A/ACTB filament and dynactin and stabilizes dynactin. Interacts with BICD2 and CEP135. Interacts with DYNAP. Interacts with ECPAS. Interacts with MAPRE1.

Its subcellular location is the cytoplasm. It localises to the cytoskeleton. It is found in the microtubule organizing center. The protein resides in the centrosome. The protein localises to the membrane. Its function is as follows. Part of the dynactin complex that activates the molecular motor dynein for ultra-processive transport along microtubules. In the dynactin soulder domain, binds the ACTR1A filament and acts as a molecular ruler to determine the length. Modulates cytoplasmic dynein binding to an organelle, and plays a role in prometaphase chromosome alignment and spindle organization during mitosis. Involved in anchoring microtubules to centrosomes. May play a role in synapse formation during brain development. This Rattus norvegicus (Rat) protein is Dynactin subunit 2 (Dctn2).